The primary structure comprises 955 residues: uncharacterized protein (955 aa).

The signal sequence occupies residues methionine 1–alanine 24. The tract at residues serine 127 to arginine 146 is disordered. The next 6 helical transmembrane spans lie at isoleucine 597–alanine 617, leucine 707–isoleucine 727, alanine 739–phenylalanine 759, valine 781–valine 801, phenylalanine 818–phenylalanine 838, and isoleucine 857–methionine 877. Residues leucine 905 to lysine 955 are disordered. Positions methionine 910–lysine 955 are enriched in basic and acidic residues.

It belongs to the TrbL/VirB6 family.

Its subcellular location is the cell membrane. This is an uncharacterized protein from Rickettsia bellii (strain RML369-C).